The following is a 334-amino-acid chain: UDP-N-acetylglucosamine--N-acetylmuramyl-(pentapeptide) pyrophosphoryl-undecaprenol N-acetylglucosamine transferase (334 aa).

UDP-N-acetyl-alpha-D-glucosamine-binding positions include threonine 11–glycine 13, asparagine 125, serine 185, isoleucine 229, and glutamine 274.

This sequence belongs to the glycosyltransferase 28 family. MurG subfamily.

It is found in the cell inner membrane. The enzyme catalyses di-trans,octa-cis-undecaprenyl diphospho-N-acetyl-alpha-D-muramoyl-L-alanyl-D-glutamyl-meso-2,6-diaminopimeloyl-D-alanyl-D-alanine + UDP-N-acetyl-alpha-D-glucosamine = di-trans,octa-cis-undecaprenyl diphospho-[N-acetyl-alpha-D-glucosaminyl-(1-&gt;4)]-N-acetyl-alpha-D-muramoyl-L-alanyl-D-glutamyl-meso-2,6-diaminopimeloyl-D-alanyl-D-alanine + UDP + H(+). It functions in the pathway cell wall biogenesis; peptidoglycan biosynthesis. Functionally, cell wall formation. Catalyzes the transfer of a GlcNAc subunit on undecaprenyl-pyrophosphoryl-MurNAc-pentapeptide (lipid intermediate I) to form undecaprenyl-pyrophosphoryl-MurNAc-(pentapeptide)GlcNAc (lipid intermediate II). The chain is UDP-N-acetylglucosamine--N-acetylmuramyl-(pentapeptide) pyrophosphoryl-undecaprenol N-acetylglucosamine transferase from Thermosipho africanus (strain TCF52B).